Consider the following 463-residue polypeptide: Steroidogenic factor 1 (463 aa).

Residues 10–85 (DELCPVCGDK…VGMRLEAVRA (76 aa)) constitute a DNA-binding region (nuclear receptor). The NR C4-type zinc finger occupies 13–33 (CPVCGDKVSGYHYGLLTCESC). Residues lysine 34, lysine 38, and lysine 72 each carry the N6-acetyllysine modification. The segment at 49–73 (CTESQNCKIDKTQRKRCPYCRFQKC) adopts an NR C4-type zinc-finger fold. Residue lysine 119 forms a Glycyl lysine isopeptide (Lys-Gly) (interchain with G-Cter in SUMO) linkage. A disordered region spans residues 119–160 (KLETGPSMGPPPQTDYPLAPALHPGAKGLAPAPPAGPPGDYE). The segment covering 135–148 (PLAPALHPGAKGLA) has biased composition (low complexity). Lysine 193 participates in a covalent cross-link: Glycyl lysine isopeptide (Lys-Gly) (interchain with G-Cter in SUMO). Positions 197–216 (PEPYASPHEPAPPYGYPEPY) are disordered. Serine 202 is modified (phosphoserine; by CDK7). A compositionally biased stretch (pro residues) spans 205 to 216 (EPAPPYGYPEPY). Positions 224–461 (GVPELILKLL…NLLIEMLHAK (238 aa)) constitute an NR LBD domain. Glycine 343, tyrosine 438, and lysine 442 together coordinate a 1,2-diacyl-sn-glycero-3-phosphocholine.

It belongs to the nuclear hormone receptor family. NR5 subfamily. In terms of assembly, binds DNA as a monomer. Part of a complex consisting of SFPQ, NONO and NR5A1. Interacts with NR0B2, NCOA2 and PPARGC1A. Interacts with DGKQ and CDK7. Binds to and activated by HIPK3. Post-translationally, acetylation stimulates the transcriptional activity. In terms of processing, sumoylation reduces CDK7-mediated phosphorylation on Ser-202. Phosphorylated on Ser-202 by CDK7. This phosphorylation promotes transcriptional activity. In terms of tissue distribution, expressed in the pre-granulosa and Sertoli cells of the ovary and testis, respectively. In the testis it is also present in the interstitial cells. In the adult ovary it is expressed in the interstitial gland, and in the granulosa cells and theca interna of small to medium-sized antral follicles, but is not expressed in large antral follicles.

It is found in the nucleus. Functionally, transcriptional activator. Seems to be essential for sexual differentiation and formation of the primary steroidogenic tissues. Binds to the Ad4 site found in the promoter region of steroidogenic P450 genes such as CYP11A, CYP11B and CYP21B. Also regulates the AMH/Muellerian inhibiting substance gene as well as the AHCH and STAR genes. 5'-YCAAGGYC-3' and 5'-RRAGGTCA-3' are the consensus sequences for the recognition by NR5A1. The SFPQ-NONO-NR5A1 complex binds to the CYP17 promoter and regulates basal and cAMP-dependent transcriptional activity. Binds phosphatidylcholine and phospholipids with a phosphatidylinositol (PI) headgroup, in particular PI(3,4)P2 and PI(3,4,5)P3. Activated by the phosphorylation of NR5A1 by HIPK3 leading to increased steroidogenic gene expression upon cAMP signaling pathway stimulation. The protein is Steroidogenic factor 1 (NR5A1) of Notamacropus eugenii (Tammar wallaby).